A 366-amino-acid chain; its full sequence is Photosynthetic reaction center cytochrome c subunit (366 aa).

The signal sequence occupies residues 1 to 22 (MALAVRISTLTVAVTAAALLAG). Residue cysteine 23 is the site of N-palmitoyl cysteine attachment. Cysteine 23 carries S-diacylglycerol cysteine lipidation. Heme-binding residues include methionine 94, cysteine 107, cysteine 110, histidine 111, methionine 129, histidine 143, cysteine 151, cysteine 154, histidine 155, methionine 238, cysteine 249, cysteine 252, histidine 253, cysteine 309, cysteine 312, and histidine 313.

As to quaternary structure, component of the photosynthetic reaction center composed of protein subunits L (PufL), M (PufM), H (PuhA) and cytochrome C (PufC). The reaction center interacts with light-harvesting antenna complex LH1. Post-translationally, binds 4 heme groups per subunit.

Its subcellular location is the cellular chromatophore membrane. Functionally, the reaction center of purple bacteria contains a tightly bound cytochrome molecule which re-reduces the photo oxidized primary electron donor. In Rubrivivax gelatinosus (strain NBRC 100245 / IL144), this protein is Photosynthetic reaction center cytochrome c subunit (pufC).